A 486-amino-acid chain; its full sequence is Membrane-bound lytic murein transglycosylase F (486 aa).

The first 21 residues, Met-1–Ala-21, serve as a signal peptide directing secretion. The interval Leu-22–Val-268 is non-LT domain. The segment at Gly-269–Asp-486 is LT domain. Glu-313 is an active-site residue.

It in the N-terminal section; belongs to the bacterial solute-binding protein 3 family. This sequence in the C-terminal section; belongs to the transglycosylase Slt family.

It is found in the cell outer membrane. The enzyme catalyses Exolytic cleavage of the (1-&gt;4)-beta-glycosidic linkage between N-acetylmuramic acid (MurNAc) and N-acetylglucosamine (GlcNAc) residues in peptidoglycan, from either the reducing or the non-reducing ends of the peptidoglycan chains, with concomitant formation of a 1,6-anhydrobond in the MurNAc residue.. Functionally, murein-degrading enzyme that degrades murein glycan strands and insoluble, high-molecular weight murein sacculi, with the concomitant formation of a 1,6-anhydromuramoyl product. Lytic transglycosylases (LTs) play an integral role in the metabolism of the peptidoglycan (PG) sacculus. Their lytic action creates space within the PG sacculus to allow for its expansion as well as for the insertion of various structures such as secretion systems and flagella. This is Membrane-bound lytic murein transglycosylase F from Yersinia pestis bv. Antiqua (strain Antiqua).